Reading from the N-terminus, the 847-residue chain is Alanine--tRNA ligase (847 aa).

Zn(2+) is bound by residues His-554, His-558, Cys-656, and His-660.

This sequence belongs to the class-II aminoacyl-tRNA synthetase family. Zn(2+) is required as a cofactor.

It localises to the cytoplasm. The catalysed reaction is tRNA(Ala) + L-alanine + ATP = L-alanyl-tRNA(Ala) + AMP + diphosphate. Functionally, catalyzes the attachment of alanine to tRNA(Ala) in a two-step reaction: alanine is first activated by ATP to form Ala-AMP and then transferred to the acceptor end of tRNA(Ala). Also edits incorrectly charged Ser-tRNA(Ala) and Gly-tRNA(Ala) via its editing domain. The chain is Alanine--tRNA ligase from Helicobacter pylori (strain ATCC 700392 / 26695) (Campylobacter pylori).